Reading from the N-terminus, the 456-residue chain is uncharacterized protein (456 aa).

Positions 2–60 (AMRKGKEYELNIEEIEFPSMGIAYHEGLKVYVKHGIPGQKVLARITTKKKDHAKGKIIE) constitute a TRAM domain. [4Fe-4S] cluster is bound by residues Cys73, Cys79, Cys82, and Cys162. Positions 288, 317, 338, and 383 each coordinate S-adenosyl-L-methionine. The active-site Nucleophile is the Cys410.

It belongs to the class I-like SAM-binding methyltransferase superfamily. RNA M5U methyltransferase family.

This is an uncharacterized protein from Clostridium tetani (strain Massachusetts / E88).